The sequence spans 313 residues: Solute carrier family 35 member E3 (313 aa).

The next 10 helical transmembrane spans lie at 14–34 (IIAG…INKW), 40–60 (GFPN…GLFI), 77–97 (ILLL…SLQS), 100–122 (IGTY…TMYY), 130–146 (IKLT…LNSY), 153–173 (LMGM…QVWV), 187–207 (LLYY…PFFE), 215–235 (IFGP…VIAF), 252–272 (TYNM…YVLF), and 275–295 (PLSL…LAYT).

The protein belongs to the TPT transporter family. SLC35E subfamily.

The protein localises to the membrane. Its function is as follows. Putative transporter. This is Solute carrier family 35 member E3 (slc35e3) from Danio rerio (Zebrafish).